We begin with the raw amino-acid sequence, 452 residues long: GTPase Der (452 aa).

EngA-type G domains are found at residues proline 4–glutamine 169 and isoleucine 177–arginine 352. GTP is bound by residues glycine 10 to serine 17, aspartate 57 to leucine 61, asparagine 120 to glutamate 123, glycine 183 to serine 190, aspartate 230 to isoleucine 234, and asparagine 295 to aspartate 298. The KH-like domain maps to arginine 353–valine 439.

This sequence belongs to the TRAFAC class TrmE-Era-EngA-EngB-Septin-like GTPase superfamily. EngA (Der) GTPase family. Associates with the 50S ribosomal subunit.

Functionally, GTPase that plays an essential role in the late steps of ribosome biogenesis. The chain is GTPase Der from Synechocystis sp. (strain ATCC 27184 / PCC 6803 / Kazusa).